Reading from the N-terminus, the 351-residue chain is Photosystem II D2 protein (351 aa).

A helical membrane pass occupies residues 39-59 (TAYLAIGGWLTGTTFVTSWYT). H116 serves as a coordination point for chlorophyll a. A helical membrane pass occupies residues 123–139 (GFMLRQFELARLIGIRP). 2 residues coordinate pheophytin a: Q128 and N141. A helical membrane pass occupies residues 151-164 (VFVSVFLLYPLGQS). Residue H196 coordinates chlorophyll a. A helical membrane pass occupies residues 206–226 (GALLSAIHGVTVENTLYEDGE). Residues H213 and F260 each contribute to the a plastoquinone site. H213 provides a ligand contact to Fe cation. Fe cation is bound at residue H267. The chain crosses the membrane as a helical span at residues 277–293 (GLWTSSIGIIGLALNLR).

It belongs to the reaction center PufL/M/PsbA/D family. In terms of assembly, PSII is composed of 1 copy each of membrane proteins PsbA, PsbB, PsbC, PsbD, PsbE, PsbF, PsbH, PsbI, PsbJ, PsbK, PsbL, PsbM, PsbT, PsbX, PsbY, PsbZ, Psb30/Ycf12, peripheral proteins PsbO, CyanoQ (PsbQ), PsbU, PsbV and a large number of cofactors. It forms dimeric complexes. The cofactor is The D1/D2 heterodimer binds P680, chlorophylls that are the primary electron donor of PSII, and subsequent electron acceptors. It shares a non-heme iron and each subunit binds pheophytin, quinone, additional chlorophylls, carotenoids and lipids. There is also a Cl(-1) ion associated with D1 and D2, which is required for oxygen evolution. The PSII complex binds additional chlorophylls, carotenoids and specific lipids..

The protein localises to the host cellular thylakoid membrane. The catalysed reaction is 2 a plastoquinone + 4 hnu + 2 H2O = 2 a plastoquinol + O2. Photosystem II (PSII) is a light-driven water:plastoquinone oxidoreductase that uses light energy to abstract electrons from H(2)O, generating O(2) and a proton gradient subsequently used for ATP formation. It consists of a core antenna complex that captures photons, and an electron transfer chain that converts photonic excitation into a charge separation. The D1/D2 (PsbA/PsbD) reaction center heterodimer binds P680, the primary electron donor of PSII as well as several subsequent electron acceptors. D2 is needed for assembly of a stable PSII complex. This is Photosystem II D2 protein (psbD) from Synechococcus.